A 220-amino-acid polypeptide reads, in one-letter code: Adenylate kinase (220 aa).

10–15 (GSGKST) serves as a coordination point for ATP. The interval 30–59 (SSGDLIRKEIAEGTPLGREMQAYLARGDLI) is NMP. Residues Ser31, Arg36, 57–59 (DLI), 83–86 (GYPR), and Gln90 contribute to the AMP site. Residues 124-161 (GRRICPKCGAVYHVEFNPPKIPGRCDVCGAELVQREDD) form an LID region. Arg125 lines the ATP pocket. 2 residues coordinate Zn(2+): Cys128 and Cys131. 134-135 (VY) is a binding site for ATP. The Zn(2+) site is built by Cys148 and Cys151. The AMP site is built by Arg158 and Arg169. Gly197 serves as a coordination point for ATP.

Belongs to the adenylate kinase family. In terms of assembly, monomer.

Its subcellular location is the cytoplasm. The catalysed reaction is AMP + ATP = 2 ADP. The protein operates within purine metabolism; AMP biosynthesis via salvage pathway; AMP from ADP: step 1/1. Catalyzes the reversible transfer of the terminal phosphate group between ATP and AMP. Plays an important role in cellular energy homeostasis and in adenine nucleotide metabolism. The chain is Adenylate kinase from Pyrococcus furiosus (strain ATCC 43587 / DSM 3638 / JCM 8422 / Vc1).